Here is a 332-residue protein sequence, read N- to C-terminus: MSTKEKLISHVSKEEAVGSRNKVTVVGVGMVGMASAISILLKDLCDELALVDVMEDKLKGEVMDLQHGSLFLKTHKIVADKDYSVTANSRVVVVTAGARQQEGESRLNLVQRNVNIFKFIIPNIVKYSPNCILMVVSNPVDILTYVAWKLSGFPRHRVIGSGTNLDSARFRHIMGEKLHLHPSSCHGWIVGEHGDSSVPVWSGVNVAGVSLQTLNPKMGAEGDSENWKAVHKMVVDGAYEVIKLKGYTSWAIGMSVADLVESIVKNLHKVHPVSTLVKGMHGVKDEVFLSVPCVLGNSGLTDVIHMTLKADEEKQLVKSAETLWGVQKELTL.

Residues 29 to 57 and Arg-99 each bind NAD(+); that span reads GMVG…MEDK. Residues Arg-106, Asn-138, and Arg-169 each coordinate substrate. Residue Asn-138 participates in NAD(+) binding. The active-site Proton acceptor is the His-193. Residue Thr-248 participates in substrate binding.

This sequence belongs to the LDH/MDH superfamily. LDH family. In terms of assembly, homotetramer.

The protein localises to the cytoplasm. It carries out the reaction (S)-lactate + NAD(+) = pyruvate + NADH + H(+). Its pathway is fermentation; pyruvate fermentation to lactate; (S)-lactate from pyruvate: step 1/1. Interconverts simultaneously and stereospecifically pyruvate and lactate with concomitant interconversion of NADH and NAD(+). This chain is L-lactate dehydrogenase A chain (ldha), found in Gillichthys seta (Shortjaw mudsucker).